The sequence spans 154 residues: UPF0178 protein SSP2038 (154 aa).

Belongs to the UPF0178 family.

The sequence is that of UPF0178 protein SSP2038 from Staphylococcus saprophyticus subsp. saprophyticus (strain ATCC 15305 / DSM 20229 / NCIMB 8711 / NCTC 7292 / S-41).